The following is a 180-amino-acid chain: Large ribosomal subunit protein uL5 (180 aa).

It belongs to the universal ribosomal protein uL5 family. Part of the 50S ribosomal subunit; part of the 5S rRNA/L5/L18/L25 subcomplex. Contacts the 5S rRNA and the P site tRNA. Forms a bridge to the 30S subunit in the 70S ribosome.

This is one of the proteins that bind and probably mediate the attachment of the 5S RNA into the large ribosomal subunit, where it forms part of the central protuberance. In the 70S ribosome it contacts protein S13 of the 30S subunit (bridge B1b), connecting the 2 subunits; this bridge is implicated in subunit movement. Contacts the P site tRNA; the 5S rRNA and some of its associated proteins might help stabilize positioning of ribosome-bound tRNAs. The sequence is that of Large ribosomal subunit protein uL5 from Pediococcus pentosaceus (strain ATCC 25745 / CCUG 21536 / LMG 10740 / 183-1w).